The following is a 517-amino-acid chain: Maturase K (517 aa).

This sequence belongs to the intron maturase 2 family. MatK subfamily.

The protein resides in the plastid. It is found in the chloroplast. Functionally, usually encoded in the trnK tRNA gene intron. Probably assists in splicing its own and other chloroplast group II introns. The chain is Maturase K from Acer pseudoplatanus (Sycamore maple).